Consider the following 550-residue polypeptide: Chaperonin GroEL (550 aa).

ATP is bound by residues 30–33 (TLGP), Lys-51, 87–91 (DGTTT), Gly-415, 480–482 (NAA), and Asp-496.

This sequence belongs to the chaperonin (HSP60) family. Forms a cylinder of 14 subunits composed of two heptameric rings stacked back-to-back. Interacts with the co-chaperonin GroES.

Its subcellular location is the cytoplasm. The catalysed reaction is ATP + H2O + a folded polypeptide = ADP + phosphate + an unfolded polypeptide.. Together with its co-chaperonin GroES, plays an essential role in assisting protein folding. The GroEL-GroES system forms a nano-cage that allows encapsulation of the non-native substrate proteins and provides a physical environment optimized to promote and accelerate protein folding. The polypeptide is Chaperonin GroEL (Variovorax paradoxus (strain S110)).